We begin with the raw amino-acid sequence, 327 residues long: Methionyl-tRNA formyltransferase (327 aa).

121–124 is a binding site for (6S)-5,6,7,8-tetrahydrofolate; sequence SLLP.

It belongs to the Fmt family.

The catalysed reaction is L-methionyl-tRNA(fMet) + (6R)-10-formyltetrahydrofolate = N-formyl-L-methionyl-tRNA(fMet) + (6S)-5,6,7,8-tetrahydrofolate + H(+). In terms of biological role, attaches a formyl group to the free amino group of methionyl-tRNA(fMet). The formyl group appears to play a dual role in the initiator identity of N-formylmethionyl-tRNA by promoting its recognition by IF2 and preventing the misappropriation of this tRNA by the elongation apparatus. The sequence is that of Methionyl-tRNA formyltransferase from Burkholderia pseudomallei (strain 1106a).